Reading from the N-terminus, the 666-residue chain is Endogenous retrovirus group K member 7 Gag polyprotein (666 aa).

G2 carries N-myristoyl glycine lipidation. Disordered regions lie at residues 165–205 (GKGP…NKTQ) and 217–264 (ELQY…GSEL). A compositionally biased stretch (pro residues) spans 232–247 (GMPPAPQGRAPYPQPP). 2 consecutive CCHC-type zinc fingers follow at residues 544 to 561 (GKCY…NCPV) and 580 to 597 (DLCP…QCRS). The disordered stretch occupies residues 598–641 (KFDKNGQPLSGNEQRGQPQAPQQTGAFPIQPFVPQGFQEQQPPL). The span at 604 to 622 (QPLSGNEQRGQPQAPQQTG) shows a compositional bias: polar residues.

It belongs to the beta type-B retroviral Gag protein family. HERV class-II K(HML-2) gag subfamily. Post-translationally, specific enzymatic cleavages may yield mature proteins. In terms of processing, myristoylation is essential for retroviral assembly. Alteration of the glycine residue leads to a block in the budding of particles and an accumulation of Gag inside the cell.

Its subcellular location is the cell membrane. Functionally, the products of the Gag polyproteins of infectious retroviruses perform highly complex orchestrated tasks during the assembly, budding, maturation, and infection stages of the viral replication cycle. During viral assembly, the proteins form membrane associations and self-associations that ultimately result in budding of an immature virion from the infected cell. Gag precursors also function during viral assembly to selectively bind and package two plus strands of genomic RNA. Endogenous Gag proteins may have kept, lost or modified their original function during evolution. This Homo sapiens (Human) protein is Endogenous retrovirus group K member 7 Gag polyprotein (ERVK-7).